Consider the following 329-residue polypeptide: Peroxidase 73 (329 aa).

Positions methionine 1 to alanine 25 are cleaved as a signal peptide. 4 disulfides stabilise this stretch: cysteine 36–cysteine 119, cysteine 69–cysteine 74, cysteine 125–cysteine 325, and cysteine 204–cysteine 236. Histidine 67 functions as the Proton acceptor in the catalytic mechanism. The Ca(2+) site is built by aspartate 68, valine 71, glycine 73, aspartate 75, and serine 77. Proline 167 provides a ligand contact to substrate. Histidine 197 is a heme b binding site. Threonine 198 provides a ligand contact to Ca(2+). Asparagine 215 carries N-linked (GlcNAc...) asparagine glycosylation. Positions 249, 252, and 257 each coordinate Ca(2+).

Belongs to the peroxidase family. Classical plant (class III) peroxidase subfamily. Requires heme b as cofactor. It depends on Ca(2+) as a cofactor. Expressed in the whole plant, with the highest expression in roots.

Its subcellular location is the secreted. It catalyses the reaction 2 a phenolic donor + H2O2 = 2 a phenolic radical donor + 2 H2O. Its function is as follows. Removal of H(2)O(2), oxidation of toxic reductants, biosynthesis and degradation of lignin, suberization, auxin catabolism, response to environmental stresses such as wounding, pathogen attack and oxidative stress. These functions might be dependent on each isozyme/isoform in each plant tissue. The protein is Peroxidase 73 (PER73) of Arabidopsis thaliana (Mouse-ear cress).